Consider the following 103-residue polypeptide: Co-chaperonin GroES (103 aa).

Belongs to the GroES chaperonin family. Heptamer of 7 subunits arranged in a ring. Interacts with the chaperonin GroEL.

The protein localises to the cytoplasm. In terms of biological role, together with the chaperonin GroEL, plays an essential role in assisting protein folding. The GroEL-GroES system forms a nano-cage that allows encapsulation of the non-native substrate proteins and provides a physical environment optimized to promote and accelerate protein folding. GroES binds to the apical surface of the GroEL ring, thereby capping the opening of the GroEL channel. This Crocosphaera subtropica (strain ATCC 51142 / BH68) (Cyanothece sp. (strain ATCC 51142)) protein is Co-chaperonin GroES.